Here is a 148-residue protein sequence, read N- to C-terminus: UPF0260 protein Sfri_1740 (148 aa).

This sequence belongs to the UPF0260 family.

This is UPF0260 protein Sfri_1740 from Shewanella frigidimarina (strain NCIMB 400).